We begin with the raw amino-acid sequence, 370 residues long: 5-hydroxytryptamine receptor 5B (370 aa).

A disordered region spans residues 1–36 (MEVSNLSGATPGIAFPPGPESCSDSPSSGRSMGSTP). At 1–48 (MEVSNLSGATPGIAFPPGPESCSDSPSSGRSMGSTPGGLILSGREPPF) the chain is on the extracellular side. Asparagine 5 carries N-linked (GlcNAc...) asparagine glycosylation. A compositionally biased stretch (low complexity) spans 20–36 (ESCSDSPSSGRSMGSTP). The chain crosses the membrane as a helical span at residues 49-75 (SAFTVLVVTLLVLLIAATFLWNLLVLV). The Cytoplasmic portion of the chain corresponds to 76-88 (TILRVRAFHRVPH). The chain crosses the membrane as a helical span at residues 89–115 (NLVASTAVSDVLVAALVMPLSLVSELS). Over 116-127 (AGRRWQLGRSLC) the chain is Extracellular. Cysteines 127 and 205 form a disulfide. The chain crosses the membrane as a helical span at residues 128 to 150 (HVWISFDVLCCTASIWNVAAIAL). Residue aspartate 134 participates in serotonin binding. Topologically, residues 151 to 168 (DRYWTITRHLQYTLRTRR) are cytoplasmic. The chain crosses the membrane as a helical span at residues 169–189 (RASALMIAITWALSALIALAP). Over 190–211 (LLFGWGEAYDARLQRCQVSQEP) the chain is Extracellular. The helical transmembrane segment at 212-233 (SYAVFSTCGAFYVPLAVVLFVY) threads the bilayer. Residues 234-300 (WKIYKAAKFR…QKEKRAAMMV (67 aa)) lie on the Cytoplasmic side of the membrane. A helical membrane pass occupies residues 301–325 (GILIGVFVLCWIPFFLTELVSPLCA). Residues 326 to 327 (CS) are Extracellular-facing. A helical membrane pass occupies residues 328–352 (LPPIWKSIFLWLGYSNSFFNPLIYT). The Cytoplasmic segment spans residues 353–370 (AFNKNYNNAFKSLFTKQR).

This sequence belongs to the G-protein coupled receptor 1 family. As to expression, brain; in the CA1 region of hippocampus, the medial habenula, and raphe nuclei.

It localises to the cell membrane. Functionally, G-protein coupled receptor for 5-hydroxytryptamine (serotonin), a biogenic hormone that functions as a neurotransmitter, a hormone and a mitogen. Also functions as a receptor for ergot alkaloid derivatives and other psychoactive substances. Ligand binding causes a conformation change that triggers signaling via guanine nucleotide-binding proteins (G proteins) and modulates the activity of downstream effectors. Htr5b is coupled to G(i)/G(o) G alpha proteins and mediates inhibitory neurotransmission: signaling inhibits adenylate cyclase activity and activates a phosphatidylinositol-calcium second messenger system that regulates the release of Ca(2+) ions from intracellular stores. This is 5-hydroxytryptamine receptor 5B from Rattus norvegicus (Rat).